Reading from the N-terminus, the 370-residue chain is MSTVTFDQISEHEQVMFCNDPHTGLKAIIAIHNTTLGPALGGCRMLPYKSEEEALTDVLRLSKGMTYKCVAADVDFGGGKAVIIGDPRKDKTPELFRAFGQFVQSLNGRFYTGTDMGTTPEDFVQAYKETSFIVGLPEEYGGNGDSSVTTAFGVMQGLRAVSQFLWGTDVLTERVFAVQGLGKVGFKVAEGLLKEGANVYVTDVDPETIAKLEEKAYQYPGHVQAVTADDIYGVGADVFVPCAIGGIINDETIERLKVKAVCGAANNQLLEDRHGKVLQAKNILYAPDYIVNAGGLIQVSDELYGPNKARVLKKTRALYDTLFEIFQSAEKKAVSTVEAANQFVEERLQKRARLNSFFSPDNPPKWRVRR.

Arg-44 serves as a coordination point for NAD(+). An L-phenylalanine-binding site is contributed by Lys-68. Lys-80 (proton donor/acceptor) is an active-site residue. 114-115 (TD) is an L-phenylalanine binding site. Residues Asp-115, Ser-146, Thr-150, 180–186 (GLGKVGF), 203–204 (DV), 243–244 (AI), and 264–266 (AAN) each bind NAD(+). Position 266 (Asn-266) interacts with L-phenylalanine.

It belongs to the Glu/Leu/Phe/Val dehydrogenases family.

It catalyses the reaction L-phenylalanine + NAD(+) + H2O = 3-phenylpyruvate + NH4(+) + NADH + H(+). It participates in amino-acid biosynthesis; L-phenylalanine biosynthesis; L-phenylalanine from phenylpyruvate (PDH route): step 1/1. Catalyzes the reversible NAD(+)-dependent oxidative deamination of L-phenylalanine to phenylpyruvate. The protein is Phenylalanine dehydrogenase of Caldalkalibacillus thermarum (strain TA2.A1).